The sequence spans 282 residues: Bis(5'-nucleosyl)-tetraphosphatase, symmetrical (282 aa).

It belongs to the Ap4A hydrolase family.

It catalyses the reaction P(1),P(4)-bis(5'-adenosyl) tetraphosphate + H2O = 2 ADP + 2 H(+). Hydrolyzes diadenosine 5',5'''-P1,P4-tetraphosphate to yield ADP. This is Bis(5'-nucleosyl)-tetraphosphatase, symmetrical from Salmonella agona (strain SL483).